The following is a 62-amino-acid chain: Conotoxin Sr5.7 (62 aa).

The N-terminal stretch at 1-22 (MRCLPVFVILLLLIASAPSVDA) is a signal peptide. Residues 23 to 44 (QLKTKDDVPLASFHDNAKGTQH) constitute a propeptide that is removed on maturation.

This sequence belongs to the conotoxin T superfamily. Post-translationally, contains 2 disulfide bonds that can be either 'C1-C3, C2-C4' or 'C1-C4, C2-C3', since these disulfide connectivities have been observed for conotoxins with cysteine framework V (for examples, see AC P0DQQ7 and AC P81755). In terms of tissue distribution, expressed by the venom duct.

The protein localises to the secreted. The protein is Conotoxin Sr5.7 of Conus spurius (Alphabet cone).